A 48-amino-acid polypeptide reads, in one-letter code: ATP synthase protein 8 (48 aa).

The helical transmembrane segment at Val-13–Leu-32 threads the bilayer.

This sequence belongs to the ATPase protein 8 family. F-type ATPases have 2 components, CF(1) - the catalytic core - and CF(0) - the membrane proton channel.

The protein resides in the mitochondrion membrane. Functionally, mitochondrial membrane ATP synthase (F(1)F(0) ATP synthase or Complex V) produces ATP from ADP in the presence of a proton gradient across the membrane which is generated by electron transport complexes of the respiratory chain. F-type ATPases consist of two structural domains, F(1) - containing the extramembraneous catalytic core and F(0) - containing the membrane proton channel, linked together by a central stalk and a peripheral stalk. During catalysis, ATP synthesis in the catalytic domain of F(1) is coupled via a rotary mechanism of the central stalk subunits to proton translocation. Part of the complex F(0) domain. Minor subunit located with subunit a in the membrane. The polypeptide is ATP synthase protein 8 (ATP8) (Trichophyton rubrum (Athlete's foot fungus)).